Reading from the N-terminus, the 599-residue chain is Putative sensor histidine kinase NtrY-like (599 aa).

4 helical membrane passes run 17-37 (ILIL…FYVI), 44-64 (FSTI…LGIL), 85-105 (IVIA…VFSV), and 285-305 (IMFI…GVLF). An HAMP domain is found at 307-361 (AKIVKPIKKLVTATDKVKDGDLTVQVPENEVDKDEIGTLYAAFNRMIKQLSRQQR). In terms of domain architecture, Histidine kinase spans 378-589 (KVAHEIKNPL…IIDIKFDLKE (212 aa)). H381 is subject to Phosphohistidine; by autocatalysis.

The protein localises to the cell membrane. It catalyses the reaction ATP + protein L-histidine = ADP + protein N-phospho-L-histidine.. Member of the two-component regulatory system RP614/RP562. The protein is Putative sensor histidine kinase NtrY-like of Rickettsia prowazekii (strain Madrid E).